The chain runs to 177 residues: Inner membrane protein p22 (177 aa).

The Intravirion portion of the chain corresponds to 1–7; the sequence is MFNIKMT. The helical transmembrane segment at 8–28 threads the bilayer; that stretch reads ISVLLIALIVLLIIILVVFLY. The Virion surface portion of the chain corresponds to 29–177; the sequence is YKKQQPPKKV…IALPRNHKHA (149 aa).

Belongs to the asfivirus inner membrane protein p22 family.

The protein localises to the virion membrane. The protein resides in the host cell membrane. The polypeptide is Inner membrane protein p22 (African swine fever virus (isolate Warthog/Namibia/Wart80/1980) (ASFV)).